The chain runs to 270 residues: Nuclear receptor-interacting protein 2 (270 aa).

Residues 1 to 27 are compositionally biased toward basic and acidic residues; that stretch reads MSTGQEARRDEGDSRKEQEASLRDRAH. A disordered region spans residues 1 to 33; that stretch reads MSTGQEARRDEGDSRKEQEASLRDRAHLSQQRQ. The interaction with NR1F2 stretch occupies residues 61–99; the sequence is KDLQPHSVIQRRLVEGNQRRLQGESPLLQALIRGHDSSR. An LXXLL motif motif is present at residues 192-196; sequence LQTLL.

Interacts with NR1F2, RARA and THRB in a ligand-dependent manner. Expression is restricted to the central nervous system (neurons in the dentate gyrus of the hippocampus, the amygdala, thalamic and hypothalamic regions).

It is found in the nucleus. Functionally, down-regulates transcriptional activation by nuclear receptors, such as NR1F2. This is Nuclear receptor-interacting protein 2 (Nrip2) from Mus musculus (Mouse).